The chain runs to 310 residues: Cytosolic Fe-S cluster assembly factor Nubp1 homolog (310 aa).

[4Fe-4S] cluster contacts are provided by C8, C22, C25, and C31. Residue 62–69 (GKGGVGKS) coordinates ATP. Positions 239 and 242 each coordinate [4Fe-4S] cluster.

This sequence belongs to the Mrp/NBP35 ATP-binding proteins family. NUBP1/NBP35 subfamily. As to quaternary structure, heterotetramer of 2 Nubp1 and 2 Nubp2 chains. Requires [4Fe-4S] cluster as cofactor.

The protein localises to the cytoplasm. Functionally, component of the cytosolic iron-sulfur (Fe/S) protein assembly (CIA) machinery. Required for maturation of extramitochondrial Fe-S proteins. The Nubp1-Nubp2 heterotetramer forms a Fe-S scaffold complex, mediating the de novo assembly of an Fe-S cluster and its transfer to target apoproteins. The polypeptide is Cytosolic Fe-S cluster assembly factor Nubp1 homolog (Drosophila willistoni (Fruit fly)).